A 312-amino-acid polypeptide reads, in one-letter code: L-type lectin-like domain-containing protein C126.08c (312 aa).

The signal sequence occupies residues 1-22 (MFFSVKNVFLLGIFGFVLGALA). At 23 to 280 (ETSHLERLSL…QKKGSFKKRL (258 aa)) the chain is on the extracellular side. Positions 24-248 (TSHLERLSLE…EIASILSRTI (225 aa)) constitute an L-type lectin-like domain. A helical membrane pass occupies residues 281–301 (IILLLSLIVIFSIFALRSYQV). Topologically, residues 302-312 (QQEKNRRTTVL) are cytoplasmic.

Its subcellular location is the membrane. It localises to the endoplasmic reticulum. The protein localises to the golgi apparatus. The protein resides in the vacuole. The protein is L-type lectin-like domain-containing protein C126.08c of Schizosaccharomyces pombe (strain 972 / ATCC 24843) (Fission yeast).